The following is a 92-amino-acid chain: Small ribosomal subunit protein uS19c (92 aa).

This sequence belongs to the universal ribosomal protein uS19 family.

It localises to the plastid. Its subcellular location is the chloroplast. Its function is as follows. Protein S19 forms a complex with S13 that binds strongly to the 16S ribosomal RNA. This Chlorokybus atmophyticus (Soil alga) protein is Small ribosomal subunit protein uS19c.